We begin with the raw amino-acid sequence, 159 residues long: Large ribosomal subunit protein bL35c (159 aa).

The N-terminal 86 residues, 1-86 (MAMASATATL…TSSPSFTVFA (86 aa)), are a transit peptide targeting the chloroplast.

As to quaternary structure, component of the chloroplast large ribosomal subunit (LSU). Mature 70S chloroplast ribosomes of higher plants consist of a small (30S) and a large (50S) subunit. The 30S small subunit contains 1 molecule of ribosomal RNA (16S rRNA) and 24 different proteins. The 50S large subunit contains 3 rRNA molecules (23S, 5S and 4.5S rRNA) and 33 different proteins.

It is found in the plastid. Its subcellular location is the chloroplast. Its function is as follows. Component of the chloroplast ribosome (chloro-ribosome), a dedicated translation machinery responsible for the synthesis of chloroplast genome-encoded proteins, including proteins of the transcription and translation machinery and components of the photosynthetic apparatus. In Spinacia oleracea (Spinach), this protein is Large ribosomal subunit protein bL35c (RPL35).